We begin with the raw amino-acid sequence, 215 residues long: Large ribosomal subunit protein uL4 (215 aa).

Residues 46–76 (TAKSKNRAEVSGGGRKPWAQKGGGRARAGSI) are disordered. Residues 56–71 (SGGGRKPWAQKGGGRA) are compositionally biased toward gly residues.

This sequence belongs to the universal ribosomal protein uL4 family. In terms of assembly, part of the 50S ribosomal subunit.

Functionally, one of the primary rRNA binding proteins, this protein initially binds near the 5'-end of the 23S rRNA. It is important during the early stages of 50S assembly. It makes multiple contacts with different domains of the 23S rRNA in the assembled 50S subunit and ribosome. Its function is as follows. Forms part of the polypeptide exit tunnel. The sequence is that of Large ribosomal subunit protein uL4 from Helicobacter acinonychis (strain Sheeba).